The chain runs to 2224 residues: Myomegalin (2224 aa).

Coiled coils occupy residues 41-97 (REDV…RQQE), 162-205 (DQYS…LLEE), 236-318 (VSES…REML), and 350-682 (CSQL…ALRQ). The interval 206-236 (PASMEVQPVPKGLPTQQKPDLHETPTTQPPV) is disordered. Polar residues predominate over residues 219–236 (PTQQKPDLHETPTTQPPV). Positions 703-751 (GVTSIGPHHGEQTDQGSMQMPSRDDSTSLTAREEASIPRSTLGDSDTVA) are disordered. Residue Thr-705 is modified to Phosphothreonine. Residues 724-738 (SRDDSTSLTAREEAS) are compositionally biased toward basic and acidic residues. 3 coiled-coil regions span residues 745–822 (GDSD…QLVD), 856–886 (NKRQQLLLMLEGLVDERSRLNEALQAERQLY), and 949–986 (AQEMLHLRAEIHQHLEEKRKAEVELKELKAQIEEAGFS). Disordered regions lie at residues 1098 to 1128 (TGLPSLGKHQHQEQENTTTARPGSRPQSLPL), 1141 to 1161 (NKSQAQDSGHQPEFSLPGSTK), and 1270 to 1298 (VSPPAKKPLENKPGKQEEFRAHGTPDDSS). Residues 1112-1124 (ENTTTARPGSRPQ) are compositionally biased toward polar residues. Coiled coils occupy residues 1159-1187 (STKHLRSQLAQCRQRYQDLQEKLLISEAT), 1295-1331 (DDSSLLRKDIRDLKAQLQNANKVIQNLRSRVRSLSAT), and 1377-1401 (GLQAKKDLESLIQRVSQLEAQLPKT). Over residues 1276-1298 (KPLENKPGKQEEFRAHGTPDDSS) the composition is skewed to basic and acidic residues. One can recognise an Olduvai domain in the interval 1497-1588 (KDHKSEKEEA…DEKKPSPSHS (92 aa)). 4 disordered regions span residues 1576 to 1637 (THYD…SLSQ), 1736 to 1757 (SSGQWDMMRPQKGSVSGELSSG), 1805 to 1824 (LSSTARENGSTSHFYSQGLE), and 1962 to 2001 (KASLGPIAVGQSFPDKAEPANLHQGSAASPPVRDVGLNSP). The segment covering 1599 to 1609 (ESSSSPISLPT) has biased composition (polar residues). Residues 1748-1757 (GSVSGELSSG) are compositionally biased toward low complexity. Positions 1769–1958 (GADLLEEHLG…RLQLEQQMDR (190 aa)) form a coiled coil. The stretch at 2148–2191 (KEGQLMEKELLDLRAQVSQQEQILQNTAARLKRANQRKKSMEQF) forms a coiled coil.

In terms of assembly, interacts with PDE4D. Isoform 2 interacts with MAPRE1 and MAPRE3. Isoform 2 forms a pericentrosomal complex with AKAP9, CDK5RAP2 and EB1/MAPRE1; within this complex, may mediate MAPRE1-binding to CDK5RAP2. Interaction with AKAP9 stabilizes both proteins. Isoform 2 interacts (via N-terminus) with CAMSAP2; this interaction is much stronger in the presence of AKAP9. In complex with AKAP9, Isoform 2 recruits CAMSAP2 to the Golgi apparatus. Isoform 2 interacts with unglycosylated LGALS3BP; this interaction may connect the pericentrosomal complex to the gamma-tubulin ring complex (gamma-TuRC) to promote microtubule assembly and acetylation.

It localises to the cytoplasm. The protein localises to the cytoskeleton. The protein resides in the microtubule organizing center. Its subcellular location is the centrosome. It is found in the golgi apparatus. Functionally, functions as an anchor sequestering components of the cAMP-dependent pathway to Golgi and/or centrosomes. In terms of biological role, participates in microtubule dynamics, promoting microtubule assembly. Depending upon the cell context, may act at the level of the Golgi apparatus or that of the centrosome. In complex with AKAP9, recruits CAMSAP2 to the Golgi apparatus and tethers non-centrosomal minus-end microtubules to the Golgi, an important step for polarized cell movement. In complex with AKAP9, EB1/MAPRE1 and CDK5RAP2, contributes to microtubules nucleation and extension from the centrosome to the cell periphery, a crucial process for directed cell migration, mitotic spindle orientation and cell-cycle progression. In Mus musculus (Mouse), this protein is Myomegalin (Pde4dip).